A 116-amino-acid polypeptide reads, in one-letter code: UPF0102 protein ELI_05985 (116 aa).

The protein belongs to the UPF0102 family.

This chain is UPF0102 protein ELI_05985, found in Erythrobacter litoralis (strain HTCC2594).